The primary structure comprises 227 residues: tRNA (guanine-N(1)-)-methyltransferase (227 aa).

Residues G112 and 131–136 each bind S-adenosyl-L-methionine; that span reads LGDFVL.

This sequence belongs to the RNA methyltransferase TrmD family. Homodimer.

It is found in the cytoplasm. The catalysed reaction is guanosine(37) in tRNA + S-adenosyl-L-methionine = N(1)-methylguanosine(37) in tRNA + S-adenosyl-L-homocysteine + H(+). In terms of biological role, specifically methylates guanosine-37 in various tRNAs. The protein is tRNA (guanine-N(1)-)-methyltransferase of Trichodesmium erythraeum (strain IMS101).